Consider the following 316-residue polypeptide: MSKRKVAIIGSGNIGTDLMIKILRHGQHLEMAVMVGIDPQSDGLARARRMGVATTHEGVIGLMNMPEFADIDIVFDATSAGAHVKNDAALREAKPDIRLIDLTPAAIGPYCVPVVNLEENVDQLNVNMVTCGGQATIPMVAAVSRVARVHYAEIIASIASKSAGPGTRANIDEFTETTSRAIEVVGGAAKGKAIIVLNPAEPPLMMRDTVYVLSDEASQDDIEASINEMAEAVQAYVPGYRLKQRVQFEVIPQDKPVNLPGVGQFSGLKTAVWLEVEGAAHYLPAYAGNLDIMTSSALATAEKMAQSLARKAGEAA.

Residue 11–14 (SGNI) coordinates NAD(+). C131 acts as the Acyl-thioester intermediate in catalysis. NAD(+)-binding positions include 162-170 (SAGPGTRAN) and N289.

This sequence belongs to the acetaldehyde dehydrogenase family. As to quaternary structure, interacts with MhpE.

It carries out the reaction acetaldehyde + NAD(+) + CoA = acetyl-CoA + NADH + H(+). It functions in the pathway aromatic compound metabolism; 3-phenylpropanoate degradation. Its function is as follows. Catalyzes the conversion of acetaldehyde to acetyl-CoA, using NAD(+) and coenzyme A. Is the final enzyme in the meta-cleavage pathway for the degradation of aromatic compounds. The sequence is that of Acetaldehyde dehydrogenase from Escherichia coli O7:K1 (strain IAI39 / ExPEC).